The sequence spans 345 residues: Photosystem II protein D1 (345 aa).

3 consecutive transmembrane segments (helical) span residues 30–47 (YVGWFGVLMIPTLLTAAT), 119–134 (HFFIGICSYMGREWEL), and 143–157 (WIAVAYSAPVAAASA). H119 lines the chlorophyll a pocket. Y127 contributes to the pheophytin a binding site. [CaMn4O5] cluster-binding residues include D171 and E190. The helical transmembrane segment at 198-219 (FHMLGVAGVFGGSLFSAMHGSL) threads the bilayer. H199 is a chlorophyll a binding site. Residues H216 and 265-266 (SF) each bind a quinone. H216 contacts Fe cation. H273 provides a ligand contact to Fe cation. A helical transmembrane segment spans residues 275–289 (FLAVWPVVGIWFTAL). [CaMn4O5] cluster is bound by residues H333, E334, D343, and A345.

Belongs to the reaction center PufL/M/PsbA/D family. PSII is composed of 1 copy each of membrane proteins PsbA, PsbB, PsbC, PsbD, PsbE, PsbF, PsbH, PsbI, PsbJ, PsbK, PsbL, PsbM, PsbT, PsbY, PsbZ, Psb30/Ycf12, at least 3 peripheral proteins of the oxygen-evolving complex and a large number of cofactors. It forms dimeric complexes. The D1/D2 heterodimer binds P680, chlorophylls that are the primary electron donor of PSII, and subsequent electron acceptors. It shares a non-heme iron and each subunit binds pheophytin, quinone, additional chlorophylls, carotenoids and lipids. D1 provides most of the ligands for the Mn4-Ca-O5 cluster of the oxygen-evolving complex (OEC). There is also a Cl(-1) ion associated with D1 and D2, which is required for oxygen evolution. The PSII complex binds additional chlorophylls, carotenoids and specific lipids. is required as a cofactor. Post-translationally, tyr-162 forms a radical intermediate that is referred to as redox-active TyrZ, YZ or Y-Z.

It localises to the plastid. The protein localises to the chloroplast thylakoid membrane. It catalyses the reaction 2 a plastoquinone + 4 hnu + 2 H2O = 2 a plastoquinol + O2. Its function is as follows. Photosystem II (PSII) is a light-driven water:plastoquinone oxidoreductase that uses light energy to abstract electrons from H(2)O, generating O(2) and a proton gradient subsequently used for ATP formation. It consists of a core antenna complex that captures photons, and an electron transfer chain that converts photonic excitation into a charge separation. The D1/D2 (PsbA/PsbD) reaction center heterodimer binds P680, the primary electron donor of PSII as well as several subsequent electron acceptors. This chain is Photosystem II protein D1, found in Euglena gracilis.